The following is a 362-amino-acid chain: Heme A synthase (362 aa).

5 consecutive transmembrane segments (helical) span residues 12-32 (AVRIWLAIIAGLIAVMVLVGG), 102-122 (VIGAAFLLPFLWFLWRGDLGG), 128-148 (LWIIFGLGALQGAVGWWMVAS), 159-179 (VRLATHLVLALLIFAGIVWTL), and 198-218 (AAVLLGLTFVQLYLGALVAGL). His-262 is a binding site for heme. 3 helical membrane-spanning segments follow: residues 264–281 (MLAYALWALAVLHAIDAW), 289–309 (GALALAVAITLQAALGIVTLL), and 312–332 (VPIGLGLAHQAMAILVLTLAV). A heme-binding site is contributed by His-320.

This sequence belongs to the COX15/CtaA family. Type 2 subfamily. As to quaternary structure, interacts with CtaB. Requires heme b as cofactor.

It localises to the cell membrane. The enzyme catalyses Fe(II)-heme o + 2 A + H2O = Fe(II)-heme a + 2 AH2. Its pathway is porphyrin-containing compound metabolism; heme A biosynthesis; heme A from heme O: step 1/1. In terms of biological role, catalyzes the conversion of heme O to heme A by two successive hydroxylations of the methyl group at C8. The first hydroxylation forms heme I, the second hydroxylation results in an unstable dihydroxymethyl group, which spontaneously dehydrates, resulting in the formyl group of heme A. The protein is Heme A synthase of Rhodopseudomonas palustris (strain BisB18).